Reading from the N-terminus, the 292-residue chain is Bifunctional protein FolD (292 aa).

NADP(+) is bound by residues 169–171 (GRS) and Ser-194.

The protein belongs to the tetrahydrofolate dehydrogenase/cyclohydrolase family. In terms of assembly, homodimer.

The enzyme catalyses (6R)-5,10-methylene-5,6,7,8-tetrahydrofolate + NADP(+) = (6R)-5,10-methenyltetrahydrofolate + NADPH. The catalysed reaction is (6R)-5,10-methenyltetrahydrofolate + H2O = (6R)-10-formyltetrahydrofolate + H(+). The protein operates within one-carbon metabolism; tetrahydrofolate interconversion. In terms of biological role, catalyzes the oxidation of 5,10-methylenetetrahydrofolate to 5,10-methenyltetrahydrofolate and then the hydrolysis of 5,10-methenyltetrahydrofolate to 10-formyltetrahydrofolate. This is Bifunctional protein FolD from Nostoc punctiforme (strain ATCC 29133 / PCC 73102).